The following is a 453-amino-acid chain: Homogentisate 1,2-dioxygenase (453 aa).

Catalysis depends on His304, which acts as the Proton acceptor. Residues His347 and Glu353 each contribute to the Fe cation site. Homogentisate-binding residues include Tyr362 and His383. Fe cation is bound at residue His383.

The protein belongs to the homogentisate dioxygenase family. Hexamer; dimer of trimers. It depends on Fe cation as a cofactor.

It catalyses the reaction homogentisate + O2 = 4-maleylacetoacetate + H(+). It functions in the pathway amino-acid degradation; L-phenylalanine degradation; acetoacetate and fumarate from L-phenylalanine: step 4/6. Functionally, involved in the catabolism of homogentisate (2,5-dihydroxyphenylacetate or 2,5-OH-PhAc), a central intermediate in the degradation of phenylalanine and tyrosine. Catalyzes the oxidative ring cleavage of the aromatic ring of homogentisate to yield maleylacetoacetate. The polypeptide is Homogentisate 1,2-dioxygenase (Sinorhizobium fredii (strain NBRC 101917 / NGR234)).